A 498-amino-acid chain; its full sequence is Glutamyl-tRNA(Gln) amidotransferase subunit A (498 aa).

Catalysis depends on charge relay system residues lysine 80 and serine 155. The tract at residues 132-159 is disordered; the sequence is SSTENSAYGPTRNPWDTDRVPGGSSGGS. Residue serine 179 is the Acyl-ester intermediate of the active site.

The protein belongs to the amidase family. GatA subfamily. As to quaternary structure, heterotrimer of A, B and C subunits.

It carries out the reaction L-glutamyl-tRNA(Gln) + L-glutamine + ATP + H2O = L-glutaminyl-tRNA(Gln) + L-glutamate + ADP + phosphate + H(+). Its function is as follows. Allows the formation of correctly charged Gln-tRNA(Gln) through the transamidation of misacylated Glu-tRNA(Gln) in organisms which lack glutaminyl-tRNA synthetase. The reaction takes place in the presence of glutamine and ATP through an activated gamma-phospho-Glu-tRNA(Gln). This Thermobifida fusca (strain YX) protein is Glutamyl-tRNA(Gln) amidotransferase subunit A.